Consider the following 252-residue polypeptide: Acetoacetate decarboxylase (252 aa).

The active-site Schiff-base intermediate with acetoacetate is lysine 116.

This sequence belongs to the ADC family.

The catalysed reaction is acetoacetate + H(+) = acetone + CO2. Catalyzes the conversion of acetoacetate to acetone and carbon dioxide. The protein is Acetoacetate decarboxylase of Paraburkholderia xenovorans (strain LB400).